A 345-amino-acid polypeptide reads, in one-letter code: MTQANTNNAYGKDIAMTVIGAGSYGTSLAISLARNGANVVLWGHEPEHMARLEADRANHAFLPGVDFPESLIIESDLEKAVQASRDLLVVVPSHVFGIVLNSCKPFLREDSRICWATKGLEPETGRLLKDVAYDIIGENYSLAVLSGPTFAKELAMGLPTAISVASPDAEFVADLQEKIHCSKTFRVYANNDFIGMQLGGAVKNVIAIGAGMSDGIGFGANARTALITRGLAEMSRLGAALGAKPETFMGMAGLGDLVLTCTDNQSRNRRFGLALGQGQDVDTAQEEIGQVVEGYRNTKEVWMLSQRMGVEMPIVDQIYQVLYQGKDARLAAQDLLARDKKAEGK.

Positions 23, 24, 44, and 118 each coordinate NADPH. Lysine 118, glycine 147, and threonine 149 together coordinate sn-glycerol 3-phosphate. Position 151 (alanine 151) interacts with NADPH. Sn-glycerol 3-phosphate is bound by residues lysine 203, aspartate 256, serine 266, arginine 267, and asparagine 268. Lysine 203 acts as the Proton acceptor in catalysis. An NADPH-binding site is contributed by arginine 267. 2 residues coordinate NADPH: valine 291 and glutamate 293.

It belongs to the NAD-dependent glycerol-3-phosphate dehydrogenase family.

Its subcellular location is the cytoplasm. It catalyses the reaction sn-glycerol 3-phosphate + NAD(+) = dihydroxyacetone phosphate + NADH + H(+). The catalysed reaction is sn-glycerol 3-phosphate + NADP(+) = dihydroxyacetone phosphate + NADPH + H(+). It functions in the pathway membrane lipid metabolism; glycerophospholipid metabolism. Its function is as follows. Catalyzes the reduction of the glycolytic intermediate dihydroxyacetone phosphate (DHAP) to sn-glycerol 3-phosphate (G3P), the key precursor for phospholipid synthesis. The sequence is that of Glycerol-3-phosphate dehydrogenase [NAD(P)+] from Vibrio parahaemolyticus serotype O3:K6 (strain RIMD 2210633).